The sequence spans 392 residues: Homoserine O-acetyltransferase (392 aa).

The 305-residue stretch at asparagine 52 to glutamate 356 folds into the AB hydrolase-1 domain. Residue serine 157 is the Nucleophile of the active site. Arginine 227 provides a ligand contact to substrate. Active-site residues include aspartate 320 and histidine 350. Aspartate 351 serves as a coordination point for substrate. The segment at serine 373–arginine 392 is disordered.

This sequence belongs to the AB hydrolase superfamily. MetX family. In terms of assembly, homodimer.

The protein resides in the cytoplasm. The catalysed reaction is L-homoserine + acetyl-CoA = O-acetyl-L-homoserine + CoA. The protein operates within amino-acid biosynthesis; L-methionine biosynthesis via de novo pathway; O-acetyl-L-homoserine from L-homoserine: step 1/1. Transfers an acetyl group from acetyl-CoA to L-homoserine, forming acetyl-L-homoserine. The sequence is that of Homoserine O-acetyltransferase from Mycolicibacterium paratuberculosis (strain ATCC BAA-968 / K-10) (Mycobacterium paratuberculosis).